The primary structure comprises 762 residues: Primary amine oxidase, liver isozyme (762 aa).

The first 16 residues, 1 to 16 (MFIFIFLSLWTLLVMG), serve as a signal peptide directing secretion. The interval 23–54 (GSEEGVGKQCHPSLPPRCPSRSPSDQPWTHPD) is disordered. N-linked (GlcNAc...) asparagine glycosylation occurs at N136. Residues C197 and C198 are joined by a disulfide bond. N-linked (GlcNAc...) asparagine glycosylation is present at N231. 383-393 (YMDSGFGMGYF) provides a ligand contact to substrate. The Proton acceptor role is filled by D385. A disulfide bridge connects residues C403 and C429. 467–472 (MLNYDY) lines the substrate pocket. The Schiff-base intermediate with substrate; via topaquinone role is filled by Y470. Position 470 is a 2',4',5'-topaquinone (Y470). 2 residues coordinate Cu cation: H519 and H521. 6 residues coordinate Ca(2+): D528, L529, D530, E571, F662, and N664. N665 carries N-linked (GlcNAc...) asparagine glycosylation. Residues E666, D672, and L673 each contribute to the Ca(2+) site. H683 lines the Cu cation pocket. Cysteines 733 and 740 form a disulfide.

This sequence belongs to the copper/topaquinone oxidase family. As to quaternary structure, homodimer; disulfide-linked. It depends on Cu cation as a cofactor. Ca(2+) serves as cofactor. The cofactor is L-topaquinone. Topaquinone (TPQ) is generated by copper-dependent autoxidation of a specific tyrosyl residue. Liver.

It localises to the secreted. It is found in the extracellular space. It carries out the reaction a primary methyl amine + O2 + H2O = an aldehyde + H2O2 + NH4(+). The polypeptide is Primary amine oxidase, liver isozyme (Bos taurus (Bovine)).